Reading from the N-terminus, the 499-residue chain is Multiphosphoryl transfer protein (499 aa).

Residues 2-142 (LELSESNIHL…AEFCAILMGE (141 aa)) enclose the PTS EIIA type-2 domain. His-62 functions as the Tele-phosphohistidine intermediate; for EIIA activity in the catalytic mechanism. His-62 carries the post-translational modification Phosphohistidine; by HPr. Residues 155–285 (SLDVNTQSLL…SDVETQSVEG (131 aa)) form a m domain region. Residues 286–376 (AVVGTFTIRN…KAIANGLGEN (91 aa)) form the HPr 1 domain. Residue His-300 is the Pros-phosphohistidine intermediate; for HPr 1 activity of the active site. A Phosphohistidine modification is found at His-300. Residues 378–409 (SAVPPSEPDTIEIMGDQIHTPAVTEDDNLPAN) are linker. The HPr 2 domain maps to 410–499 (AIEAVFVIKN…GAVIESGLGE (90 aa)). His-424 carries the post-translational modification Phosphohistidine. His-424 serves as the catalytic Pros-phosphohistidine intermediate; for HPr 2 activity.

The protein resides in the cytoplasm. Its function is as follows. The phosphoenolpyruvate-dependent sugar phosphotransferase system (sugar PTS), a major carbohydrate active transport system, catalyzes the phosphorylation of incoming sugar substrates concomitantly with their translocation across the cell membrane. The enzyme II FruAB PTS system is involved in fructose transport. In Haemophilus influenzae (strain ATCC 51907 / DSM 11121 / KW20 / Rd), this protein is Multiphosphoryl transfer protein (fruB).